A 3423-amino-acid chain; its full sequence is Genome polyprotein (3423 aa).

The disordered stretch occupies residues 1 to 25 (MKNPKKKSGGFRIVNMLKRGVARVS). The Cytoplasmic portion of the chain corresponds to 1-104 (MKNPKKKSGG…INARKEKKRR (104 aa)). Residues 37–72 (LLLGHGPIRMVLAILAFLRFTAIKPSLGLINRWGSV) form a hydrophobic; homodimerization of capsid protein C region. The propeptide at 105–122 (GTDTSVGIVGLLLTTAMA) is ER anchor for capsid protein C, removed in mature form by serine protease NS3. A helical transmembrane segment spans residues 105-125 (GTDTSVGIVGLLLTTAMAVEV). The Extracellular portion of the chain corresponds to 126–249 (TRRGNAYYMY…YTKHLIRVEN (124 aa)). A glycan (N-linked (GlcNAc...) asparagine; by host) is linked at N192. The chain crosses the membrane as a helical span at residues 250 to 269 (WIFRNPGFALAAAAIAWLLG). Topologically, residues 270-274 (SSTSQ) are cytoplasmic. A helical membrane pass occupies residues 275-290 (KVIYLVMILLIAPAYS). Over 291-745 (IRCIGVSNRD…HQIFGAAFKS (455 aa)) the chain is Extracellular. Residue K328 forms a Glycyl lysine isopeptide (Lys-Gly) (interchain with G-Cter in ubiquitin) linkage. Cystine bridges form between C350–C406 and C382–C411. The tract at residues 388-401 (DRGWGNGCGLFGKG) is fusion peptide. N-linked (GlcNAc...) asparagine; by host glycosylation is present at N444. Intrachain disulfides connect C480–C581 and C598–C629. K571 is covalently cross-linked (Glycyl lysine isopeptide (Lys-Gly) (interchain with G-Cter in ubiquitin)). The chain crosses the membrane as a helical span at residues 746-767 (LFGGMSWFSQILIGTLLVWLGL). Residues 768–773 (NTKNGS) are Cytoplasmic-facing. Residues 774 to 794 (ISLMCLALGGVLIFLSTAVSA) form a helical membrane-spanning segment. Residues 795 to 1177 (DVGCSVDFSK…EGLKKRMTTK (383 aa)) lie on the Lumenal side of the membrane. Disulfide bonds link C798/C809, C849/C937, C973/C1017, C1074/C1123, C1085/C1106, and C1107/C1110. N924 and N1001 each carry an N-linked (GlcNAc...) asparagine; by host glycan. The chain crosses the membrane as a helical span at residues 1178–1198 (IIISTSMAVLVAMILGGFSMS). Residues 1199–1220 (DLAKLAILMGATFAEMNTGGDV) lie on the Cytoplasmic side of the membrane. A helical membrane pass occupies residues 1221–1241 (AHLALIAAFKVRPALLVSFIF). The Lumenal segment spans residues 1242–1270 (RANWTPRESMLLALASCLLQTAISALEGD). A helical membrane pass occupies residues 1271 to 1291 (LMVPINGFALAWLAIRAMVVP). Over 1292 to 1295 (RTDN) the chain is Cytoplasmic. Residues 1296–1316 (ITLAILAALTPLARGTLLVAW) traverse the membrane as a helical segment. Over 1317-1345 (RAGLATCGGFMLLSLKGKGSVKKNLPFVM) the chain is Lumenal. The helical transmembrane segment at 1346-1366 (ALGLTAVRLVDPINVVGLLLL) threads the bilayer. The Cytoplasmic portion of the chain corresponds to 1367-1373 (TRSGKRS). A helical transmembrane segment spans residues 1374–1394 (WPPSEVLTAVGLICALAGGFA). Topologically, residues 1395–1397 (KAD) are lumenal. Residues 1398–1418 (IEMAGPMAAVGLLIVSYVVSG) traverse the membrane as a helical segment. The Cytoplasmic segment spans residues 1419-1472 (KSVDMYIERAGDITWEKDAEVTGNSPRLDVALDESGDFSLVEDDGPPMREIILK). The tract at residues 1425–1464 (IERAGDITWEKDAEVTGNSPRLDVALDESGDFSLVEDDGP) is interacts with and activates NS3 protease. Residues 1429-1451 (GDITWEKDAEVTGNSPRLDVALD) form a disordered region. The helical intramembrane region spans 1473–1493 (VVLMAICGMNPIAIPFAAGAW). Topologically, residues 1494 to 2170 (YVYVKTGKRS…KAAAAQLPET (677 aa)) are lumenal. The Peptidase S7 domain occupies 1503 to 1680 (SGALWDVPAP…RREEETPVEC (178 aa)). Catalysis depends on charge relay system; for serine protease NS3 activity residues H1553, D1577, and S1637. The Helicase ATP-binding domain occupies 1683 to 1839 (PSMLKKKQLT…DSNSPIMDTE (157 aa)). Residues 1687–1690 (KKKQ) form an important for RNA-binding region. 1696 to 1703 (LHPGAGKT) is a binding site for ATP. A DEAH box motif is present at residues 1787–1790 (DEAH). The Helicase C-terminal domain occupies 1834-2013 (PIMDTEVEVP…GLIASLYRPE (180 aa)). An N6-acetyllysine; by host modification is found at K1891. Residues 2171–2191 (LETIMLLGLLGTVSLGIFFVL) traverse the membrane as a helical segment. At 2192-2195 (MRNK) the chain is on the lumenal side. The segment at residues 2196–2216 (GIGKMGFGMVTLGASAWLMWL) is an intramembrane region (helical). The Cytoplasmic segment spans residues 2217–2218 (SE). Residues 2219–2239 (IEPARIACVLIVVFLLLVVLI) form a helical membrane-spanning segment. At 2240–2254 (PEPEKQRSPQDNQMA) the chain is on the lumenal side. An intramembrane region (helical) is located at residues 2255 to 2269 (IIIMVAVGLLGLITA). Over 2270–2307 (NELGWLERTKSDLSHLMGRREEGATIGFSMDIDLRPAS) the chain is Lumenal. The segment at residues 2308-2328 (AWAIYAALTTFITPAVQHAVT) is an intramembrane region (helical). Over 2329–2344 (TSYNNYSLMAMATQAG) the chain is Lumenal. Residues 2345–2365 (VLFGMGKGMPFYAWDFGVPLL) form a helical membrane-spanning segment. Over 2366-2375 (MIGCYSQLTP) the chain is Cytoplasmic. Residues 2376-2396 (LTLIVAIILLVAHYMYLIPGL) traverse the membrane as a helical segment. Residues 2397–2441 (QAAAARAAQKRTAAGIMKNPVVDGIVVTDIDTMTIDPQVEKKMGQ) lie on the Lumenal side of the membrane. A helical transmembrane segment spans residues 2442–2462 (VLLIAVAVSSAILSRTAWGWG). Topologically, residues 2463-3423 (EAGALITAAT…GEEGSTPGVL (961 aa)) are cytoplasmic. Positions 2521-2785 (GGGTGETLGE…DVNLGSGTRA (265 aa)) constitute an mRNA cap 0-1 NS5-type MT domain. 2533–2539 (KARLNQM) contacts GTP. S2576 lines the S-adenosyl-L-methionine pocket. Residue S2576 is modified to Phosphoserine. K2581 acts as the For 2'-O-MTase activity in catalysis. An SUMO-interacting motif (SIM) region spans residues 2597 to 2600 (VIDL). G2606, W2607, T2624, K2625, H2630, E2631, D2651, V2652, D2666, and I2667 together coordinate S-adenosyl-L-methionine. The active-site For 2'-O-MTase activity is D2666. Residue 2669–2675 (ESSSSPE) coordinates GTP. K2702 acts as the For 2'-O-MTase activity in catalysis. 2733–2735 (RNS) lines the GTP pocket. E2738 (for 2'-O-MTase activity) is an active-site residue. Y2740 serves as a coordination point for S-adenosyl-L-methionine. Positions 2908–2914 (KHKRPRV) match the Nuclear localization signal (NLS) motif. Positions 2959, 2963, 2968, and 2971 each coordinate Zn(2+). One can recognise a RdRp catalytic domain in the interval 3049 to 3199 (GRMYADDTAG…KPIDDRFAHA (151 aa)). Zn(2+) contacts are provided by H3234, C3250, and C3369.

It in the N-terminal section; belongs to the class I-like SAM-binding methyltransferase superfamily. mRNA cap 0-1 NS5-type methyltransferase family. Homodimer. Interacts with host SERTAD3; this interaction promotes capsid protein C degradation. Interacts with host CAPRIN1; this interaction is probably linked to the inhibition of stress granules formation by the virus. Interacts with host G3BP1; this interaction is probably linked to the inhibition of stress granules formation by the virus. As to quaternary structure, forms heterodimers with envelope protein E in the endoplasmic reticulum and Golgi. Interacts with non-structural protein 2A. In terms of assembly, homodimer; in the endoplasmic reticulum and Golgi. Interacts with host TYRO3, AXL and DC-SIGN proteins. Interacts with non-structural protein 2A. Interacts with host HAVCR1; this interaction likely mediates virus attachment to host cell. Interacts with host NCAM1. Interacts with host HSPA5. Interacts with Aedes aegypti SRPN25, APY and venom allergen-1 salivary proteins; the interactions do not affect Zika virus replication in human endothelial cells and keratinocytes. Homodimer; Homohexamer when secreted. Interacts with host TBK1. Interacts with host USP8. Interacts with envelope protein E. As to quaternary structure, interacts with the structural protein prM/E complex, and the NS2B/NS3 protease complex. In terms of assembly, forms a heterodimer with serine protease NS3. May form homooligomers. Interacts with human SPCS1. Interacts with non-structural protein 2A. Forms a heterodimer with NS2B. Interacts with NS4B. Interacts with unphosphorylated RNA-directed RNA polymerase NS5; this interaction stimulates RNA-directed RNA polymerase NS5 guanylyltransferase activity. Interacts with non-structural protein 2A. Interacts with host SHFL; this interaction promotes NS3 degradation via a lysosome-dependent pathway. Interacts with host CEP63; this interaction disorganizes the centrosome and inhibits host innate immune response. As to quaternary structure, may interact with host ANKLE2; the interaction may cause defects in brain development, such as microcephaly. May interact with host SRPRA and SEC61G. In terms of assembly, interacts with serine protease NS3. Interacts with NS1. Homodimer. Interacts with host STAT2; this interaction inhibits the phosphorylation of the latter, and, when all viral proteins are present (polyprotein), targets STAT2 for degradation. Interacts with host TBK1 and IKBKE; these interactions lead to the inhibition of the host RIG-I signaling pathway. Interacts with host PAF1 complex; the interaction may prevent the recruitment of the host PAF1 complex to interferon-responsive genes, and thus reduces the immune response. Interacts with serine protease NS3. Interacts with host KPNA2. Interacts with host ZSWIM8; this interaction allows STAT2 binding to ZSWIM8 and subsequent proteasomal degradation leading to inhibition of interferon signaling. Post-translationally, specific enzymatic cleavages in vivo yield mature proteins. Cleavages in the lumen of endoplasmic reticulum are performed by host signal peptidase, whereas cleavages in the cytoplasmic side are performed by serine protease NS3. Signal cleavage at the 2K-4B site requires a prior NS3 protease-mediated cleavage at the 4A-2K site. In terms of processing, cleaved in post-Golgi vesicles by a host furin, releasing the mature small envelope protein M, and peptide pr. This cleavage is incomplete as up to 30% of viral particles still carry uncleaved prM. N-glycosylation plays a role in virulence in mammalian and mosquito hosts, but may have no effect on neurovirulence. Post-translationally, ubiquitination by host TRIM7 promotes virus attachment and fusion of the virus and the host endosome membrane. In terms of processing, N-glycosylated. The excreted form is glycosylated, which is required for efficient secretion of the protein from infected cells. Ubiquitination by host TRIM22 leads to proteasomal degradation. Post-translationally, acetylated by host KAT5. Acetylation modulates NS3 RNA-binding and unwinding activities and plays an important positive role for viral replication. In terms of processing, phosphorylated on serines residues. This phosphorylation may trigger NS5 nuclear localization. Sumoylated, required for regulating IFN induced interferon stimulated genes/ISGs.

Its subcellular location is the virion. It is found in the host nucleus. It localises to the host cytoplasm. The protein localises to the host perinuclear region. The protein resides in the secreted. Its subcellular location is the virion membrane. It is found in the host endoplasmic reticulum membrane. It localises to the host cell surface. It carries out the reaction a 5'-end (5'-triphosphoguanosine)-ribonucleoside in mRNA + S-adenosyl-L-methionine = a 5'-end (N(7)-methyl 5'-triphosphoguanosine)-ribonucleoside in mRNA + S-adenosyl-L-homocysteine. The enzyme catalyses a 5'-end (N(7)-methyl 5'-triphosphoguanosine)-ribonucleoside in mRNA + S-adenosyl-L-methionine = a 5'-end (N(7)-methyl 5'-triphosphoguanosine)-(2'-O-methyl-ribonucleoside) in mRNA + S-adenosyl-L-homocysteine + H(+). It catalyses the reaction RNA(n) + a ribonucleoside 5'-triphosphate = RNA(n+1) + diphosphate. The catalysed reaction is Selective hydrolysis of -Xaa-Xaa-|-Yaa- bonds in which each of the Xaa can be either Arg or Lys and Yaa can be either Ser or Ala.. It carries out the reaction a ribonucleoside 5'-triphosphate + H2O = a ribonucleoside 5'-diphosphate + phosphate + H(+). The enzyme catalyses ATP + H2O = ADP + phosphate + H(+). Functionally, plays a role in virus budding by binding to the cell membrane and gathering the viral RNA into a nucleocapsid that forms the core of the mature virus particle. During virus entry, may induce genome penetration into the host cytoplasm after hemifusion induced by the surface proteins. Can migrate to the cell nucleus where it modulates host functions. Inhibits the integrated stress response (ISR) in the infected cell. Inhibits RNA silencing by interfering with host Dicer. Its function is as follows. Prevents premature fusion activity of envelope proteins in trans-Golgi by binding to envelope protein E at pH 6.0. After virion release in extracellular space, gets dissociated from E dimers. In terms of biological role, plays a role in host immune defense modulation and protection of envelope protein E during virion synthesis. PrM-E cleavage is inefficient, many virions are only partially matured and immature prM-E proteins could play a role in immune evasion. Contributes to fetal microcephaly in humans. Acts as a chaperone for envelope protein E during intracellular virion assembly by masking and inactivating envelope protein E fusion peptide. prM is the only viral peptide matured by host furin in the trans-Golgi network probably to avoid catastrophic activation of the viral fusion activity in acidic Golgi compartment prior to virion release. Functionally, may play a role in virus budding. Exerts cytotoxic effects by activating a mitochondrial apoptotic pathway through M ectodomain. May display a viroporin activity. Binds to host cell surface receptors and mediates fusion between viral and cellular membranes. Efficient virus attachment to cell is, at least in part, mediated by host HAVCR1 in a cell-type specific manner. In addition, host NCAM1 can also be used as entry receptor. Interaction with host HSPA5 plays an important role in the early stages of infection as well. Envelope protein is synthesized in the endoplasmic reticulum and forms a heterodimer with protein prM. The heterodimer plays a role in virion budding in the ER, and the newly formed immature particle is covered with 60 spikes composed of heterodimers between precursor prM and envelope protein E. The virion is transported to the Golgi apparatus where the low pH causes the dissociation of PrM-E heterodimers and formation of E homodimers. PrM-E cleavage is inefficient, many virions are only partially matured and immature prM-E proteins could play a role in immune evasion. Its function is as follows. Plays a role in the inhibition of host RLR-induced interferon-beta activation by targeting TANK-binding kinase 1/TBK1. In addition, recruits the host deubiquitinase USP8 to cleave 'Lys-11'-linked polyubiquitin chains from caspase-1/CASP1 thus inhibiting its proteasomal degradation. In turn, stabilized CASP1 promotes cleavage of cGAS, which inhibits its ability to recognize mitochondrial DNA release and initiate type I interferon signaling. In terms of biological role, component of the viral RNA replication complex that recruits genomic RNA, the structural protein prM/E complex, and the NS2B/NS3 protease complex to the virion assembly site and orchestrates virus morphogenesis. Also antagonizes the host alpha/beta interferon antiviral response. May disrupt adherens junction formation and thereby impair proliferation of radial cells in the host cortex. Functionally, required cofactor for the serine protease function of NS3. Displays three enzymatic activities: serine protease, NTPase and RNA helicase. NS3 serine protease, in association with NS2B, performs its autocleavage and cleaves the polyprotein at dibasic sites in the cytoplasm: C-prM, NS2A-NS2B, NS2B-NS3, NS3-NS4A, NS4A-2K and NS4B-NS5. NS3 RNA helicase binds RNA and unwinds dsRNA in the 3' to 5' direction. Leads to translation arrest when expressed ex vivo. Disrupts host centrosome organization in a CEP63-dependent manner to degrade host TBK1 and inhibits innate immune response. Inhibits the integrated stress response (ISR) in the infected cell. Its function is as follows. Regulates the ATPase activity of the NS3 helicase activity. NS4A allows NS3 helicase to conserve energy during unwinding. Cooperatively with NS4B suppresses the Akt-mTOR pathway and leads to cellular dysregulation. By inhibiting host ANKLE2 functions, may cause defects in brain development, such as microcephaly. Also antagonizes the host MDA5-mediated induction of alpha/beta interferon antiviral response. Leads to translation arrest when expressed ex vivo. Inhibits the integrated stress response (ISR) in the infected cell. In terms of biological role, functions as a signal peptide for NS4B and is required for the interferon antagonism activity of the latter. Functionally, induces the formation of ER-derived membrane vesicles where the viral replication takes place. Also plays a role in the inhibition of host RLR-induced interferon-beta production at TANK-binding kinase 1/TBK1 level. Cooperatively with NS4A suppresses the Akt-mTOR pathway and leads to cellular dysregulation. Replicates the viral (+) and (-) RNA genome, and performs the capping of genomes in the cytoplasm. Methylates viral RNA cap at guanine N-7 and ribose 2'-O positions. Once sufficient NS5 is expressed, binds to the cap-proximal structure and inhibits further translation of the viral genome. Besides its role in RNA genome replication, also prevents the establishment of a cellular antiviral state by blocking the interferon-alpha/beta (IFN-alpha/beta) signaling pathway. Mechanistically, interferes with host kinases TBK1 and IKKE upstream of interferon regulatory factor 3/IRF3 to inhibit the RIG-I pathway. Also antagonizes type I interferon signaling by targeting STAT2 for degradation by the proteasome thereby preventing activation of JAK-STAT signaling pathway. Mechanistically, acts as a scaffold protein to connect host ZSWIM8/CUL3 ligase complex and STAT2, leading to STAT2 degradation. Within the host nucleus, disrupts host SUMO1 and STAT2 co-localization with PML, resulting in PML degradation. May also reduce immune responses by preventing the recruitment of the host PAF1 complex to interferon-responsive genes. The protein is Genome polyprotein of Zika virus (isolate ZIKV/Human/Cambodia/FSS13025/2010) (ZIKV).